The sequence spans 103 residues: Protein IQ-DOMAIN 20 (103 aa).

A calmodulin-binding region spans residues 10 to 22 (VVRRKLLRRSQSR). 2 IQ domains span residues 36 to 62 (EEIA…LKSL) and 63 to 87 (VKLQ…CMHA).

The protein belongs to the IQD family. As to quaternary structure, interacts with calmodulin (CaM and CML) at the plasma membrane in a calcium ion Ca(2+)- independent manner, however, Ca(2+) seems to modulate calmodulin binding. Binds to multiple calmodulin (CaM) in the presence of Ca(2+) and CaM-like proteins.

It localises to the nucleus. The protein resides in the nucleolus. The protein localises to the cell membrane. Functionally, may be involved in cooperative interactions with calmodulins or calmodulin-like proteins. Recruits calmodulin proteins to microtubules, thus being a potential scaffold in cellular signaling and trafficking. May associate with nucleic acids and regulate gene expression at the transcriptional or post-transcriptional level. The polypeptide is Protein IQ-DOMAIN 20 (Arabidopsis thaliana (Mouse-ear cress)).